The chain runs to 1001 residues: Sarcoplasmic/endoplasmic reticulum calcium ATPase 1 (1001 aa).

The next 4 helical transmembrane spans lie at 49–69 (LWEL…LLAA), 90–110 (EPFV…WQER), 254–273 (DEFG…AVWL), and 296–313 (FKIA…GLPA). Positions 304, 305, 307, and 309 each coordinate Ca(2+). The active-site 4-aspartylphosphate intermediate is the D351. Mg(2+)-binding residues include D351 and T353. T353 lines the ATP pocket. Position 441 is a phosphothreonine (T441). Residues E442, R489, K515, and R560 each contribute to the ATP site. A Phosphothreonine modification is found at T569. A Phosphoserine modification is found at S581. The ATP site is built by T625, G626, D627, R678, and K684. A Mg(2+)-binding site is contributed by D703. An ATP-binding site is contributed by N706. Transmembrane regions (helical) follow at residues 758–777 (KQFI…CIFL), 788–808 (IPVQ…TALG), and 829–851 (ISGW…TVGA). Residues N768, E771, N796, T799, and D800 each contribute to the Ca(2+) site. Positions 788–808 (IPVQLLWVNLVTDGLPATALG) are interaction with PLN. The cysteines at positions 876 and 888 are disulfide-linked. 3 helical membrane-spanning segments follow: residues 898–917 (TMAL…NSLS), 931–949 (IWLL…LILY), and 965–985 (TQWL…EILK). Ca(2+) is bound at residue E908. The interval 932–943 (WLLGSICLSMSL) is interaction with PLN.

This sequence belongs to the cation transport ATPase (P-type) (TC 3.A.3) family. Type IIA subfamily. Interacts with sarcolipin (SLN). Interacts with phospholamban (PLN). Interacts with myoregulin (MRLN). Interacts with DWORF. Interacts with VMP1. The cofactor is Mg(2+). As to expression, skeletal muscle, fast twitch muscle (type II) fibers.

The protein localises to the endoplasmic reticulum membrane. The protein resides in the sarcoplasmic reticulum membrane. The catalysed reaction is Ca(2+)(in) + ATP + H2O = Ca(2+)(out) + ADP + phosphate + H(+). With respect to regulation, inhibited by sarcolipin (SLN) and myoregulin (MRLN). Has also been shown to be reversibly inhibited by phospholamban (PLN) at low calcium concentrations in vitro. Dephosphorylated PLN decreases the apparent affinity of the ATPase for calcium and this inhibition is regulated by the phosphorylation of PLN in vitro. Enhanced by DWORF; DWORF increases activity by displacing sarcolipin (SLN), phospholamban (PLN) and myoregulin (MRLN). Key regulator of striated muscle performance by acting as the major Ca(2+) ATPase responsible for the reuptake of cytosolic Ca(2+) into the sarcoplasmic reticulum. Catalyzes the hydrolysis of ATP coupled with the translocation of calcium from the cytosol to the sarcoplasmic reticulum lumen. Contributes to calcium sequestration involved in muscular excitation/contraction. This chain is Sarcoplasmic/endoplasmic reticulum calcium ATPase 1, found in Homo sapiens (Human).